The following is a 367-amino-acid chain: MITYETRVKIDELREKYLNFVKLIDPDKLNMELKKMESEMSDPEIWKDQRKAGEISKKVRRIKELLSDISEIERNFEDIDVGIELSEEDPGIAQDIEKIVQEVEKNIRRFQLELILNDPLDQNNAYLSIHPGAGGTESHDWAQMLLRMYMRWAERKGFIVELLDFQPGEEAGLKSATILVKGEYAYGYLKHERGVHRLVRISPFDAAKRRHTSFASVNVVPEISDDIDVEIKPEDIRIDTFRASGHGGQYVNRTDSAVRITHLPTGIVVSCQSERSQHQNKALAMKVLKAKLYQLELAKRREQLDEIQGELKEISWGNQIRSYILQPYTLVKDHRTDIETGNFDAVLDGELDQFIEAELLYFADYKI.

An N5-methylglutamine modification is found at Q249.

The protein belongs to the prokaryotic/mitochondrial release factor family. In terms of processing, methylated by PrmC. Methylation increases the termination efficiency of RF2.

It is found in the cytoplasm. Functionally, peptide chain release factor 2 directs the termination of translation in response to the peptide chain termination codons UGA and UAA. This chain is Peptide chain release factor 2, found in Pseudothermotoga lettingae (strain ATCC BAA-301 / DSM 14385 / NBRC 107922 / TMO) (Thermotoga lettingae).